Here is a 335-residue protein sequence, read N- to C-terminus: Aspartate carbamoyltransferase catalytic subunit (335 aa).

Carbamoyl phosphate contacts are provided by R54 and T55. Position 82 (K82) interacts with L-aspartate. 3 residues coordinate carbamoyl phosphate: R104, H134, and Q137. Residues R177 and R232 each coordinate L-aspartate. Carbamoyl phosphate contacts are provided by G277 and P278.

Belongs to the aspartate/ornithine carbamoyltransferase superfamily. ATCase family. In terms of assembly, heterododecamer (2C3:3R2) of six catalytic PyrB chains organized as two trimers (C3), and six regulatory PyrI chains organized as three dimers (R2).

The catalysed reaction is carbamoyl phosphate + L-aspartate = N-carbamoyl-L-aspartate + phosphate + H(+). The protein operates within pyrimidine metabolism; UMP biosynthesis via de novo pathway; (S)-dihydroorotate from bicarbonate: step 2/3. In terms of biological role, catalyzes the condensation of carbamoyl phosphate and aspartate to form carbamoyl aspartate and inorganic phosphate, the committed step in the de novo pyrimidine nucleotide biosynthesis pathway. This chain is Aspartate carbamoyltransferase catalytic subunit, found in Paenarthrobacter aurescens (strain TC1).